We begin with the raw amino-acid sequence, 261 residues long: Calbindin (261 aa).

A2 bears the N-acetylalanine mark. Residues 2–7 (AESHLQ) are interaction with RANBP9. 5 EF-hand domains span residues 11–46 (ITAS…LLQA), 53–88 (ELSP…EENF), 98–133 (KSCE…LLEK), 142–177 (KLAE…QENF), and 186–221 (MCGK…LCEK). Residues D24, D26, S28, Y30, and E35 each coordinate Ca(2+). Ca(2+) contacts are provided by D111, D113, S115, E122, D155, N157, D159, K161, E166, D199, D201, N203, Y205, and E210.

Belongs to the calbindin family. Interacts with RANBP9.

Functionally, buffers cytosolic calcium. May stimulate a membrane Ca(2+)-ATPase and a 3',5'-cyclic nucleotide phosphodiesterase. This chain is Calbindin (Calb1), found in Rattus norvegicus (Rat).